Reading from the N-terminus, the 79-residue chain is uncharacterized protein (79 aa).

This is an uncharacterized protein from Saccharomyces cerevisiae (strain ATCC 204508 / S288c) (Baker's yeast).